The primary structure comprises 78 residues: U7-lycotoxin-Ls1f (78 aa).

A signal peptide spans Met-1–Ala-22. Positions Gln-23 to Gly-26 are excised as a propeptide.

This sequence belongs to the neurotoxin 19 (CSTX) family. 07 (U7-Lctx) subfamily. Contains 4 disulfide bonds. Expressed by the venom gland.

It localises to the secreted. In Lycosa singoriensis (Wolf spider), this protein is U7-lycotoxin-Ls1f.